Reading from the N-terminus, the 752-residue chain is Probable GTP-binding protein OBGC1, chloroplastic (752 aa).

The transit peptide at 1-90 (MAPAVAVVAA…RFPTANPEPR (90 aa)) directs the protein to the chloroplast. A disordered region spans residues 19-121 (FSAEARRNTK…EEDEVELGLR (103 aa)). Residues 26-36 (NTKGSRSKRGS) show a composition bias toward basic residues. A compositionally biased stretch (acidic residues) spans 103-117 (GDDEEDEEEEEDEVE). The Obg domain maps to 294 to 452 (MRCFDTAKIY…MWIDLELKLV (159 aa)). The region spanning 453-621 (ADVGIVGAPN…VVLAAYKVLQ (169 aa)) is the OBG-type G domain. GTP-binding positions include 459–466 (GAPNAGKS), 484–488 (FTTLL), 506–509 (DLPG), 573–576 (NKMD), and 602–604 (SAM). Positions 466 and 486 each coordinate Mg(2+). The 80-residue stretch at 649–728 (ERRAPMNEFE…VGEMEMVWTD (80 aa)) folds into the OCT domain. The disordered stretch occupies residues 728–752 (DEPSKTRSSKTMNSKDDSVRWPEFG). The span at 740 to 752 (NSKDDSVRWPEFG) shows a compositional bias: basic and acidic residues.

Belongs to the TRAFAC class OBG-HflX-like GTPase superfamily. OBG GTPase family. Requires Mg(2+) as cofactor.

It is found in the plastid. The protein localises to the chloroplast. Probable GTP-binding protein that may play a role in chloroplast development. The chain is Probable GTP-binding protein OBGC1, chloroplastic (OBGC1) from Oryza sativa subsp. indica (Rice).